Consider the following 395-residue polypeptide: MHTHASRPHARQSALPRRAALFDFPASADLSPDTGAARQHTIQWLSRFRVFENHASVEEYDALRFDVLTGLFYPRATGADLNLGSDLVGWYFVFDDQFDGELGCRPEEVARLVADVIRVTEEDMAPGGTGGGEGPLLESFRDLWHRINSGRPRVWRDRFRHHWLEYLHSYHREALERTGAAPADGGGDAPRSVEDVLALRRHSIGVQPCLDLNEPFGGYTLPSALHGGFPLARMREATDDVVVFTNDIASLDKELAVGDVHNSVIVQWKLAGGGVEDAVRHIAGLANARYGWFEETAARLPELLAEAGADPGTHRAVGRYVDGMRHVMTGNLGWSLRTARYDERGTEAVSGGRERPWARLTGAEDLIRAGRGAPPPPGSGPDTRQPMPSEPSQLA.

Residues D95, N246, S250, and E254 each contribute to the Mg(2+) site. Basic and acidic residues predominate over residues 346–357 (TEAVSGGRERPW). Residues 346-395 (TEAVSGGRERPWARLTGAEDLIRAGRGAPPPPGSGPDTRQPMPSEPSQLA) are disordered.

This sequence belongs to the terpene synthase family. Requires Mg(2+) as cofactor.

The catalysed reaction is (2E,6E)-farnesyl diphosphate + H2O = (+)-isoafricanol + diphosphate. Catalyzes the cyclization of farnesyl diphosphate (FPP) to isoafricanol. The chain is Isoafricanol synthase from Streptomyces malaysiensis.